Here is a 26-residue protein sequence, read N- to C-terminus: Acetyl-CoA acetyltransferase (26 aa).

C21 functions as the Acyl-thioester intermediate in the catalytic mechanism.

The protein belongs to the thiolase-like superfamily. Thiolase family. Homotetramer. Post-translationally, succinylation, adjacent to a coenzyme A binding site. Desuccinylated by SIRT5.

The protein resides in the mitochondrion. The catalysed reaction is 2 acetyl-CoA = acetoacetyl-CoA + CoA. The chain is Acetyl-CoA acetyltransferase from Sus scrofa (Pig).